Here is a 389-residue protein sequence, read N- to C-terminus: Packaging protein 3 (389 aa).

An interaction with packaging protein 1 region spans residues 1–131 (MHPVLRQMKP…VKAEVNFQTT (131 aa)). The segment at 350-389 (EKENPDGSVSFQQHERGTQSHENGGHAEPAYSRRQLGRFY) is disordered. A compositionally biased stretch (basic and acidic residues) spans 362–374 (QHERGTQSHENGG).

This sequence belongs to the adenoviridae packaging protein 3 family. In terms of assembly, part of the genome packaging complex composed of packaging proteins 1, 2 and 3; this complex specifically binds to the packaging sequence on the left end of viral genomic DNA and performs packaging of the viral genome. Interacts with hexon-linking protein IIIa; this interaction is required to promote correct genome packaging. Post-translationally, cleaved at different sites by the viral protease during virion maturation.

Its subcellular location is the host nucleus. Involved in viral genome packaging through its interaction with packaging proteins 1 and 2. After proteolytic cleavage by adenovirus protease, L1 52/55k protein is removed from the capsid during viral maturation. The polypeptide is Packaging protein 3 (Canine adenovirus serotype 1 (strain CLL) (CAdV-1)).